The chain runs to 192 residues: E3 ubiquitin-protein ligase RNF185 (192 aa).

Over residues 1–13 (MASKGPSASASTE) the composition is skewed to polar residues. A disordered region spans residues 1 to 30 (MASKGPSASASTENSNAGGPSGSSNGTGES). Residues 1–130 (MASKGPSASA…GGFQGFGFGD (130 aa)) are Cytoplasmic-facing. The span at 14–27 (NSNAGGPSGSSNGT) shows a compositional bias: low complexity. The tract at residues 29-80 (ESGGQDSTFECNICLDTAKDAVISLCGHLFCWPCLHQWLETRPNRQVCPVCK) is required for ubiquitin ligase activity and protection against ER stress-induced cell death. An RING-type zinc finger spans residues 39-80 (CNICLDTAKDAVISLCGHLFCWPCLHQWLETRPNRQVCPVCK). Residues 90 to 123 (PLYGRGSTGQQDPREKTPPRPQGQRPEPENRGGF) are disordered. The chain crosses the membrane as a helical span at residues 131-151 (GGFQMSFGIGAFPFGIFATAF). The Mitochondrial intermembrane portion of the chain corresponds to 152–171 (NINDGRPPPAVPGTPQYVDE). The chain crosses the membrane as a helical span at residues 172-192 (QFLSRLFLFVALVIMFWLLIA).

Interacts with ATG5 and BNIP1. As to expression, ubiquitously expressed with high expression in testis.

It localises to the mitochondrion outer membrane. The protein resides in the endoplasmic reticulum membrane. It carries out the reaction S-ubiquitinyl-[E2 ubiquitin-conjugating enzyme]-L-cysteine + [acceptor protein]-L-lysine = [E2 ubiquitin-conjugating enzyme]-L-cysteine + N(6)-ubiquitinyl-[acceptor protein]-L-lysine.. The protein operates within protein modification; protein ubiquitination. E3 ubiquitin-protein ligase that regulates selective mitochondrial autophagy by mediating 'Lys-63'-linked polyubiquitination of BNIP1. Acts in the endoplasmic reticulum (ER)-associated degradation (ERAD) pathway, which targets misfolded proteins that accumulate in the endoplasmic reticulum (ER) for ubiquitination and subsequent proteasome-mediated degradation. Protects cells from ER stress-induced apoptosis. Responsible for the cotranslational ubiquitination and degradation of CFTR in the ERAD pathway. Also acts as a regulator of the innate antiviral response by catalyzing 'Lys-27'-linked polyubiquitination of CGAS, thereby promoting CGAS cyclic GMP-AMP synthase activity. Preferentially associates with the E2 enzymes UBE2J1 and UBE2J2. The sequence is that of E3 ubiquitin-protein ligase RNF185 (Rnf185) from Mus musculus (Mouse).